The chain runs to 633 residues: tRNA uridine 5-carboxymethylaminomethyl modification enzyme MnmG (633 aa).

Residues G15–G20, I127, and S182 each bind FAD. G276 to F290 is an NAD(+) binding site. Residue Q373 coordinates FAD.

It belongs to the MnmG family. As to quaternary structure, homodimer. Heterotetramer of two MnmE and two MnmG subunits. FAD is required as a cofactor.

It localises to the cytoplasm. Functionally, NAD-binding protein involved in the addition of a carboxymethylaminomethyl (cmnm) group at the wobble position (U34) of certain tRNAs, forming tRNA-cmnm(5)s(2)U34. The chain is tRNA uridine 5-carboxymethylaminomethyl modification enzyme MnmG from Streptococcus agalactiae serotype III (strain NEM316).